The following is a 344-amino-acid chain: Probable dual-specificity RNA methyltransferase RlmN (344 aa).

Residue Glu83 is the Proton acceptor of the active site. The region spanning 89–323 (YLDRKTICVS…VSVRRSRGKD (235 aa)) is the Radical SAM core domain. Cys96 and Cys328 are joined by a disulfide. [4Fe-4S] cluster is bound by residues Cys103, Cys107, and Cys110. Residues 153–154 (GE), Ser185, 209–211 (SLH), and Asn285 contribute to the S-adenosyl-L-methionine site. Cys328 acts as the S-methylcysteine intermediate in catalysis.

It belongs to the radical SAM superfamily. RlmN family. It depends on [4Fe-4S] cluster as a cofactor.

The protein localises to the cytoplasm. The enzyme catalyses adenosine(2503) in 23S rRNA + 2 reduced [2Fe-2S]-[ferredoxin] + 2 S-adenosyl-L-methionine = 2-methyladenosine(2503) in 23S rRNA + 5'-deoxyadenosine + L-methionine + 2 oxidized [2Fe-2S]-[ferredoxin] + S-adenosyl-L-homocysteine. The catalysed reaction is adenosine(37) in tRNA + 2 reduced [2Fe-2S]-[ferredoxin] + 2 S-adenosyl-L-methionine = 2-methyladenosine(37) in tRNA + 5'-deoxyadenosine + L-methionine + 2 oxidized [2Fe-2S]-[ferredoxin] + S-adenosyl-L-homocysteine. Specifically methylates position 2 of adenine 2503 in 23S rRNA and position 2 of adenine 37 in tRNAs. This chain is Probable dual-specificity RNA methyltransferase RlmN, found in Deinococcus geothermalis (strain DSM 11300 / CIP 105573 / AG-3a).